The sequence spans 602 residues: uncharacterized protein (602 aa).

In terms of domain architecture, MCM spans 271–472 (IIDILADILI…RDEEVAKYIF (202 aa)). 315 to 322 (TEVGIDKT) is an ATP binding site.

Belongs to the MCM family.

This is an uncharacterized protein from Methanocaldococcus jannaschii (strain ATCC 43067 / DSM 2661 / JAL-1 / JCM 10045 / NBRC 100440) (Methanococcus jannaschii).